Consider the following 497-residue polypeptide: Probable cytosol aminopeptidase (497 aa).

Mn(2+) is bound by residues K265 and D270. K277 is a catalytic residue. Mn(2+) contacts are provided by D288, D347, and E349. R351 is an active-site residue.

The protein belongs to the peptidase M17 family. It depends on Mn(2+) as a cofactor.

Its subcellular location is the cytoplasm. The catalysed reaction is Release of an N-terminal amino acid, Xaa-|-Yaa-, in which Xaa is preferably Leu, but may be other amino acids including Pro although not Arg or Lys, and Yaa may be Pro. Amino acid amides and methyl esters are also readily hydrolyzed, but rates on arylamides are exceedingly low.. It carries out the reaction Release of an N-terminal amino acid, preferentially leucine, but not glutamic or aspartic acids.. In terms of biological role, presumably involved in the processing and regular turnover of intracellular proteins. Catalyzes the removal of unsubstituted N-terminal amino acids from various peptides. The polypeptide is Probable cytosol aminopeptidase (Geobacillus sp. (strain WCH70)).